The primary structure comprises 492 residues: Glycogen synthase 1 (492 aa).

Lysine 15 is an ADP-alpha-D-glucose binding site.

The protein belongs to the glycosyltransferase 1 family. Bacterial/plant glycogen synthase subfamily.

It catalyses the reaction [(1-&gt;4)-alpha-D-glucosyl](n) + ADP-alpha-D-glucose = [(1-&gt;4)-alpha-D-glucosyl](n+1) + ADP + H(+). Its pathway is glycan biosynthesis; glycogen biosynthesis. Functionally, synthesizes alpha-1,4-glucan chains using ADP-glucose. The protein is Glycogen synthase 1 of Trichormus variabilis (strain ATCC 29413 / PCC 7937) (Anabaena variabilis).